Reading from the N-terminus, the 310-residue chain is Porphobilinogen deaminase (310 aa).

C242 is modified (S-(dipyrrolylmethanemethyl)cysteine).

It belongs to the HMBS family. In terms of assembly, monomer. The cofactor is dipyrromethane.

The catalysed reaction is 4 porphobilinogen + H2O = hydroxymethylbilane + 4 NH4(+). It participates in porphyrin-containing compound metabolism; protoporphyrin-IX biosynthesis; coproporphyrinogen-III from 5-aminolevulinate: step 2/4. Tetrapolymerization of the monopyrrole PBG into the hydroxymethylbilane pre-uroporphyrinogen in several discrete steps. The sequence is that of Porphobilinogen deaminase from Alcanivorax borkumensis (strain ATCC 700651 / DSM 11573 / NCIMB 13689 / SK2).